Reading from the N-terminus, the 455-residue chain is Immunoglobulin alpha-2 heavy chain (455 aa).

4 consecutive Ig-like domains span residues 1–95 (EVQL…VYYC), 121–213 (PKVF…QDVT), 227–322 (PRLS…ANIT), and 330–432 (PEVH…KTID). The tract at residues 1–115 (EVQLVETGGG…GKGTTVTVSS (115 aa)) is variable (V) domain, involved in antigen recognition. Disulfide bonds link Cys-22–Cys-95 and Cys-141–Cys-200. The interval 116-455 (ASPTSPKVFP…VMAEADGTCY (340 aa)) is constant (C) domain. N-linked (GlcNAc...) asparagine glycans are attached at residues Asn-162, Asn-207, and Asn-246. Disulfide bonds link Cys-225-Cys-282 and Cys-249-Cys-306. A glycan (N-linked (GlcNAc...) asparagine) is linked at Asn-320. Cysteines 352 and 415 form a disulfide. Asn-442 carries N-linked (GlcNAc...) asparagine glycosylation.

Immunoglobulins are composed of two identical heavy chains and two identical light chains; disulfide-linked. Monomeric or polymeric.

Its subcellular location is the secreted. The protein resides in the cell membrane. Its function is as follows. Immunoglobulins, also known as antibodies, are membrane-bound or secreted glycoproteins produced by B lymphocytes. In the recognition phase of humoral immunity, the membrane-bound immunoglobulins serve as receptors which, upon binding of a specific antigen, trigger the clonal expansion and differentiation of B lymphocytes into immunoglobulins-secreting plasma cells. Secreted immunoglobulins mediate the effector phase of humoral immunity, which results in the elimination of bound antigens. The antigen binding site is formed by the variable domain of one heavy chain, together with that of its associated light chain. Thus, each immunoglobulin has two antigen binding sites with remarkable affinity for a particular antigen. The variable domains are assembled by a process called V-(D)-J rearrangement and can then be subjected to somatic hypermutations which, after exposure to antigen and selection, allow affinity maturation for a particular antigen. Ig alpha is the major immunoglobulin class in body secretions. In Homo sapiens (Human), this protein is Immunoglobulin alpha-2 heavy chain.